The sequence spans 296 residues: MIKLKRLSDKPVLMPKAENEWERAAVFNTAAIYDNGLFHLIYRATDIGPHAKYGKYISRLGYAVSKDGINFMRLDKPVMSNETEQELRGLEDPRIVKIDGIYYMMYTGFGDRFQDDYRICLATSKNLIDWERKGVVLDEPNKDASLFPEKINGKYVMLHRRYPDIWIAFSDDLKNWYDHKPILKPIPNTWESARVGIGGPPIKTKDGWFLIYHAADDNNVYRLGAVLLDLEDPSKVIARQKEPILEPELGWEKEGYIPNVVFSCGNAVKDDTIYVYYGGADTVIGVAILEMKDIKF.

The protein belongs to the glycosyl hydrolase 130 family. As to quaternary structure, homodimer.

The enzyme catalyses [(1-&gt;2)-beta-D-mannosyl](n) + phosphate = [(1-&gt;2)-beta-D-mannosyl](n-1) + alpha-D-mannose 1-phosphate. Its pathway is nucleotide-sugar biosynthesis; GDP-alpha-D-mannose biosynthesis. Probably involved in a salvage pathway for GDP-D-mannose biosynthesis. Catalyzes the reversible phosphorolysis of 1,2-beta-oligomannan. In phosphorolytic reactions, prefers 1,2-beta-oligomannan with a degree of polymerization (DP) of 3, 4 and 5. Produces alpha-D-mannose 1-phosphate, which is the precursor of GDP-D-mannose. This chain is 1,2-beta-oligomannan phosphorylase, found in Thermoanaerobacter sp. (strain X514).